The sequence spans 275 residues: 4-hydroxy-3-methylbut-2-enyl diphosphate reductase (275 aa).

C12 serves as a coordination point for [4Fe-4S] cluster. (2E)-4-hydroxy-3-methylbut-2-enyl diphosphate is bound by residues H40 and H70. The dimethylallyl diphosphate site is built by H40 and H70. 2 residues coordinate isopentenyl diphosphate: H40 and H70. Position 92 (C92) interacts with [4Fe-4S] cluster. Residue H119 coordinates (2E)-4-hydroxy-3-methylbut-2-enyl diphosphate. H119 is a binding site for dimethylallyl diphosphate. Residue H119 coordinates isopentenyl diphosphate. Catalysis depends on E121, which acts as the Proton donor. T151 is a binding site for (2E)-4-hydroxy-3-methylbut-2-enyl diphosphate. A [4Fe-4S] cluster-binding site is contributed by C181. Residues S209, S210, N211, and S251 each contribute to the (2E)-4-hydroxy-3-methylbut-2-enyl diphosphate site. 4 residues coordinate dimethylallyl diphosphate: S209, S210, N211, and S251. Isopentenyl diphosphate contacts are provided by S209, S210, N211, and S251.

The protein belongs to the IspH family. It depends on [4Fe-4S] cluster as a cofactor.

The catalysed reaction is isopentenyl diphosphate + 2 oxidized [2Fe-2S]-[ferredoxin] + H2O = (2E)-4-hydroxy-3-methylbut-2-enyl diphosphate + 2 reduced [2Fe-2S]-[ferredoxin] + 2 H(+). The enzyme catalyses dimethylallyl diphosphate + 2 oxidized [2Fe-2S]-[ferredoxin] + H2O = (2E)-4-hydroxy-3-methylbut-2-enyl diphosphate + 2 reduced [2Fe-2S]-[ferredoxin] + 2 H(+). It participates in isoprenoid biosynthesis; dimethylallyl diphosphate biosynthesis; dimethylallyl diphosphate from (2E)-4-hydroxy-3-methylbutenyl diphosphate: step 1/1. Its pathway is isoprenoid biosynthesis; isopentenyl diphosphate biosynthesis via DXP pathway; isopentenyl diphosphate from 1-deoxy-D-xylulose 5-phosphate: step 6/6. In terms of biological role, catalyzes the conversion of 1-hydroxy-2-methyl-2-(E)-butenyl 4-diphosphate (HMBPP) into a mixture of isopentenyl diphosphate (IPP) and dimethylallyl diphosphate (DMAPP). Acts in the terminal step of the DOXP/MEP pathway for isoprenoid precursor biosynthesis. The polypeptide is 4-hydroxy-3-methylbut-2-enyl diphosphate reductase (Thermotoga sp. (strain RQ2)).